We begin with the raw amino-acid sequence, 702 residues long: Ribosomal RNA large subunit methyltransferase K/L (702 aa).

Residues 43-154 enclose the THUMP domain; that stretch reads LVYQSLMWSR…KETASIALDL (112 aa).

Belongs to the methyltransferase superfamily. RlmKL family.

Its subcellular location is the cytoplasm. It catalyses the reaction guanosine(2445) in 23S rRNA + S-adenosyl-L-methionine = N(2)-methylguanosine(2445) in 23S rRNA + S-adenosyl-L-homocysteine + H(+). It carries out the reaction guanosine(2069) in 23S rRNA + S-adenosyl-L-methionine = N(2)-methylguanosine(2069) in 23S rRNA + S-adenosyl-L-homocysteine + H(+). Specifically methylates the guanine in position 2445 (m2G2445) and the guanine in position 2069 (m7G2069) of 23S rRNA. The polypeptide is Ribosomal RNA large subunit methyltransferase K/L (Escherichia coli (strain SMS-3-5 / SECEC)).